We begin with the raw amino-acid sequence, 284 residues long: Bifunctional protein FolD (284 aa).

NADP(+) contacts are provided by residues 164 to 166 (GRG), Ser189, and Ile230.

Belongs to the tetrahydrofolate dehydrogenase/cyclohydrolase family. In terms of assembly, homodimer.

It catalyses the reaction (6R)-5,10-methylene-5,6,7,8-tetrahydrofolate + NADP(+) = (6R)-5,10-methenyltetrahydrofolate + NADPH. The enzyme catalyses (6R)-5,10-methenyltetrahydrofolate + H2O = (6R)-10-formyltetrahydrofolate + H(+). Its pathway is one-carbon metabolism; tetrahydrofolate interconversion. Its function is as follows. Catalyzes the oxidation of 5,10-methylenetetrahydrofolate to 5,10-methenyltetrahydrofolate and then the hydrolysis of 5,10-methenyltetrahydrofolate to 10-formyltetrahydrofolate. This chain is Bifunctional protein FolD, found in Desulforamulus reducens (strain ATCC BAA-1160 / DSM 100696 / MI-1) (Desulfotomaculum reducens).